The primary structure comprises 489 residues: Hyaluronoglucuronidase (489 aa).

Catalysis depends on Glu-176, which acts as the Proton donor. Glu-290 (nucleophile) is an active-site residue.

The protein belongs to the glycosyl hydrolase 79 family.

It catalyses the reaction Random hydrolysis of (1-&gt;3)-linkages between beta-D-glucuronate and N-acetyl-D-glucosamine residues in hyaluronate.. With respect to regulation, hyaluronidase activity is inhibited by Mn(2+), Cu(2+) and Fe(3+). Functionally, hyaluronidase that mediates hydrolysis of (1-&gt;3)-linkages between beta-D-glucuronate and N-acetyl-D-glucosamine residues in hyaluronate. Very specific to hyaluronate: not able to hydrolyze chitin, heparin or chondroitin sulfate. This Hirudo nipponia (Korean blood-sucking leech) protein is Hyaluronoglucuronidase.